A 121-amino-acid polypeptide reads, in one-letter code: MSITKDQILEAFAAMSVMEVVELIEAMEEKFGVSAAAAVVSGGAEAAVVEEQTEFNVVLTAHGDNKVAVIKAIRSATGLGLKEAKAMSEAAPVAVKEGVSKEEAEALKKELTEAGASVEIK.

This sequence belongs to the bacterial ribosomal protein bL12 family. Homodimer. Part of the ribosomal stalk of the 50S ribosomal subunit. Forms a multimeric L10(L12)X complex, where L10 forms an elongated spine to which 2 to 4 L12 dimers bind in a sequential fashion. Binds GTP-bound translation factors.

Functionally, forms part of the ribosomal stalk which helps the ribosome interact with GTP-bound translation factors. Is thus essential for accurate translation. The sequence is that of Large ribosomal subunit protein bL12 from Shewanella baltica (strain OS223).